Reading from the N-terminus, the 122-residue chain is Large ribosomal subunit protein uL14c (122 aa).

This sequence belongs to the universal ribosomal protein uL14 family. Part of the 50S ribosomal subunit.

The protein resides in the plastid. It localises to the chloroplast. Binds to 23S rRNA. The chain is Large ribosomal subunit protein uL14c from Porphyra purpurea (Red seaweed).